Reading from the N-terminus, the 305-residue chain is UDP-3-O-acyl-N-acetylglucosamine deacetylase (305 aa).

The Zn(2+) site is built by His-79, His-238, and Asp-242. The active-site Proton donor is His-265.

This sequence belongs to the LpxC family. Zn(2+) is required as a cofactor.

The enzyme catalyses a UDP-3-O-[(3R)-3-hydroxyacyl]-N-acetyl-alpha-D-glucosamine + H2O = a UDP-3-O-[(3R)-3-hydroxyacyl]-alpha-D-glucosamine + acetate. Its pathway is glycolipid biosynthesis; lipid IV(A) biosynthesis; lipid IV(A) from (3R)-3-hydroxytetradecanoyl-[acyl-carrier-protein] and UDP-N-acetyl-alpha-D-glucosamine: step 2/6. Its function is as follows. Catalyzes the hydrolysis of UDP-3-O-myristoyl-N-acetylglucosamine to form UDP-3-O-myristoylglucosamine and acetate, the committed step in lipid A biosynthesis. In Shigella dysenteriae serotype 1 (strain Sd197), this protein is UDP-3-O-acyl-N-acetylglucosamine deacetylase.